Reading from the N-terminus, the 460-residue chain is tRNA modification GTPase MnmE (460 aa).

(6S)-5-formyl-5,6,7,8-tetrahydrofolate contacts are provided by Arg29, Glu89, and Arg128. The TrmE-type G domain occupies 224-382 (GVPTVIIGKP…LKQNLLEIIQ (159 aa)). Asn234 contributes to the K(+) binding site. GTP is bound by residues 234-239 (NAGKST), 253-259 (SEIAGTT), and 278-281 (DTAG). Ser238 provides a ligand contact to Mg(2+). 3 residues coordinate K(+): Ser253, Ile255, and Thr258. Thr259 is a Mg(2+) binding site. Residue Lys460 participates in (6S)-5-formyl-5,6,7,8-tetrahydrofolate binding.

This sequence belongs to the TRAFAC class TrmE-Era-EngA-EngB-Septin-like GTPase superfamily. TrmE GTPase family. As to quaternary structure, homodimer. Heterotetramer of two MnmE and two MnmG subunits. K(+) serves as cofactor.

Its subcellular location is the cytoplasm. Exhibits a very high intrinsic GTPase hydrolysis rate. Involved in the addition of a carboxymethylaminomethyl (cmnm) group at the wobble position (U34) of certain tRNAs, forming tRNA-cmnm(5)s(2)U34. The chain is tRNA modification GTPase MnmE from Cytophaga hutchinsonii (strain ATCC 33406 / DSM 1761 / CIP 103989 / NBRC 15051 / NCIMB 9469 / D465).